A 309-amino-acid chain; its full sequence is Cilia-and flagella-associated protein 96 (309 aa).

The interval 220–249 is disordered; that stretch reads EEKKKTISNTFKPSSPGKKPGGMKAGTFDP.

This sequence belongs to the CFAP96 family. As to expression, detected in testis and fetal liver.

The protein localises to the cytoplasm. It localises to the cytoskeleton. Its subcellular location is the microtubule organizing center. It is found in the centrosome. The chain is Cilia-and flagella-associated protein 96 from Homo sapiens (Human).